Here is a 247-residue protein sequence, read N- to C-terminus: MNGRADFREPNAQVSRPIPDIGGGYIPTEEEWRLFAECHEECFWFRSVPLAATSMLITQGLISKGILSSHPKYGSIPKLIFACIVGYFAGKLSYVKTCQEKFKKLENSPLGEALRSGELRRSLPPGHYTQKPKYDSNVSGQSSFGTSPAADNIEKETLPRYEPIPFSASMNESTPTGITDHIAQGPDPNLEDSPKRKSVTYEELRNKNRESYGVTLSHKTDPSVRPMQERGPQKEVKVNKYGDTWDE.

Residues 1 to 112 (MNGRADFREP…KKLENSPLGE (112 aa)) form the OCIA domain. Phosphoserine is present on residues serine 108 and serine 116. Residues 116–247 (SGELRRSLPP…VNKYGDTWDE (132 aa)) form a disordered region. 2 stretches are compositionally biased toward polar residues: residues 136–146 (SNVSGQSSFGT) and 168–177 (ASMNESTPTG). Composition is skewed to basic and acidic residues over residues 192–210 (DSPK…KNRE) and 218–240 (HKTD…KVNK). Phosphoserine is present on residues serine 193 and serine 198.

It belongs to the OCIAD1 family. Interacts with OCIAD2. Interacts with STAT3.

It is found in the endosome. Its function is as follows. Maintains stem cell potency. Increases STAT3 phosphorylation and controls ERK phosphorylation. May act as a scaffold, increasing STAT3 recruitment onto endosomes. In Rattus norvegicus (Rat), this protein is OCIA domain-containing protein 1.